The sequence spans 310 residues: Cytosolic Fe-S cluster assembly factor NUBP1 homolog (310 aa).

[4Fe-4S] cluster-binding residues include Cys-12, Cys-26, Cys-29, and Cys-35. Residue 66–73 (GKGGVGKS) participates in ATP binding. The [4Fe-4S] cluster site is built by Cys-240 and Cys-243.

Belongs to the Mrp/NBP35 ATP-binding proteins family. NUBP1/NBP35 subfamily. Heterotetramer of 2 NUBP1 and 2 NUBP2 chains. It depends on [4Fe-4S] cluster as a cofactor.

The protein resides in the cytoplasm. Its function is as follows. Component of the cytosolic iron-sulfur (Fe/S) protein assembly (CIA) machinery. Required for maturation of extramitochondrial Fe-S proteins. The NUBP1-NUBP2 heterotetramer forms a Fe-S scaffold complex, mediating the de novo assembly of an Fe-S cluster and its transfer to target apoproteins. In Brugia malayi (Filarial nematode worm), this protein is Cytosolic Fe-S cluster assembly factor NUBP1 homolog.